Here is a 223-residue protein sequence, read N- to C-terminus: Cytidylate kinase (223 aa).

Residue 12–20 participates in ATP binding; that stretch reads GPSGVGKGT.

Belongs to the cytidylate kinase family. Type 1 subfamily.

It is found in the cytoplasm. It catalyses the reaction CMP + ATP = CDP + ADP. It carries out the reaction dCMP + ATP = dCDP + ADP. In Xylella fastidiosa (strain M23), this protein is Cytidylate kinase.